We begin with the raw amino-acid sequence, 339 residues long: MEEAHNMREIRLREIVVNHAVLSSCLDKCGDCFASEAARIKFDNDIEAIFELKRKRNAVILAHNYQTPEIFHGVADIVGDSLALARKAIDVDADVIVLAGVHFMAETAKLLNPEKTVLIPDMEAGCSLAESITPEDVALLRQTYPGIPIVTYVNTSAAVKAASDICCTSGNAKKVVEALGVPKVLMIPDEYLARNVAKETEVQIISWHGHCEVHELFSASDILQLRENHPGVTVLAHPECPPDVVAAADFAGSTAAMSDYVTTKQPKRVVLLTECSMSDNIAVHHPDVEFISSCNLCPHMKRITLANIRTALEENRHEVTVDAKIAAPARRAVERMLAI.

Residues histidine 63 and serine 81 each contribute to the iminosuccinate site. Residue cysteine 126 participates in [4Fe-4S] cluster binding. Iminosuccinate contacts are provided by residues 152-154 (YVN) and serine 169. Cysteine 211 lines the [4Fe-4S] cluster pocket. Iminosuccinate contacts are provided by residues 237 to 239 (HPE) and threonine 254. Cysteine 297 lines the [4Fe-4S] cluster pocket.

It belongs to the quinolinate synthase family. Type 2 subfamily. It depends on [4Fe-4S] cluster as a cofactor.

It is found in the cytoplasm. The catalysed reaction is iminosuccinate + dihydroxyacetone phosphate = quinolinate + phosphate + 2 H2O + H(+). It participates in cofactor biosynthesis; NAD(+) biosynthesis; quinolinate from iminoaspartate: step 1/1. Functionally, catalyzes the condensation of iminoaspartate with dihydroxyacetone phosphate to form quinolinate. This is Quinolinate synthase from Xylella fastidiosa (strain 9a5c).